The chain runs to 281 residues: ATP phosphoribosyltransferase (281 aa).

This sequence belongs to the ATP phosphoribosyltransferase family. Long subfamily. The cofactor is Mg(2+).

The protein resides in the cytoplasm. The enzyme catalyses 1-(5-phospho-beta-D-ribosyl)-ATP + diphosphate = 5-phospho-alpha-D-ribose 1-diphosphate + ATP. It participates in amino-acid biosynthesis; L-histidine biosynthesis; L-histidine from 5-phospho-alpha-D-ribose 1-diphosphate: step 1/9. With respect to regulation, feedback inhibited by histidine. In terms of biological role, catalyzes the condensation of ATP and 5-phosphoribose 1-diphosphate to form N'-(5'-phosphoribosyl)-ATP (PR-ATP). Has a crucial role in the pathway because the rate of histidine biosynthesis seems to be controlled primarily by regulation of HisG enzymatic activity. The chain is ATP phosphoribosyltransferase (hisG) from Archaeoglobus fulgidus (strain ATCC 49558 / DSM 4304 / JCM 9628 / NBRC 100126 / VC-16).